The sequence spans 434 residues: Beta-enolase (434 aa).

An N-acetylalanine modification is found at alanine 2. Phosphothreonine is present on threonine 72. Phosphoserine occurs at positions 83 and 157. 2 residues coordinate substrate: histidine 158 and glutamate 167. Phosphoserine is present on serine 176. Threonine 205 is modified (phosphothreonine). Residue glutamate 210 is the Proton donor of the active site. Position 229 is a phosphothreonine (threonine 229). A Phosphotyrosine modification is found at tyrosine 236. A Mg(2+)-binding site is contributed by aspartate 245. Serine 263 bears the Phosphoserine mark. Positions 293 and 318 each coordinate substrate. Mg(2+) is bound by residues glutamate 293 and aspartate 318. Lysine 343 (proton acceptor) is an active-site residue. Substrate contacts are provided by residues serine 370 to serine 373 and lysine 394.

This sequence belongs to the enolase family. As to quaternary structure, mammalian enolase is composed of 3 isozyme subunits, alpha, beta and gamma, which can form homodimers or heterodimers which are cell-type and development-specific. Interacts with PNKD. It depends on Mg(2+) as a cofactor.

The protein resides in the cytoplasm. It catalyses the reaction (2R)-2-phosphoglycerate = phosphoenolpyruvate + H2O. It functions in the pathway carbohydrate degradation; glycolysis; pyruvate from D-glyceraldehyde 3-phosphate: step 4/5. In terms of biological role, glycolytic enzyme that catalyzes the conversion of 2-phosphoglycerate to phosphoenolpyruvate. Appears to have a function in striated muscle development and regeneration. The sequence is that of Beta-enolase (ENO3) from Sus scrofa (Pig).